Consider the following 82-residue polypeptide: Musculoskeletal embryonic nuclear protein 1 (82 aa).

Residues 1–34 (MSQAGAQEAPIKKKRPPVKEEDLKGARGNLTKNQ) form a disordered region. Ser-2 is subject to Phosphoserine. Residues 10–18 (PIKKKRPPV) carry the Nuclear localization signal motif.

Belongs to the MUSTN1 family.

It is found in the nucleus. It localises to the cytoplasm. Its subcellular location is the secreted. The protein resides in the extracellular space. In terms of biological role, required for chondrocyte development and proliferation. Plays a role in myoblast differentiation and fusion. Modulates skeletal muscle extracellular matrix composition. Plays a role in skeletal muscle function. Plays a role in glucose homeostasis. This chain is Musculoskeletal embryonic nuclear protein 1 (MUSTN1), found in Bos taurus (Bovine).